Reading from the N-terminus, the 196-residue chain is Dephospho-CoA kinase (196 aa).

A DPCK domain is found at 5-196; it reads IIGLTGGIAT…QVDIALNFEL (192 aa). 13–18 contacts ATP; the sequence is ATGKTT.

The protein belongs to the CoaE family.

The protein resides in the cytoplasm. The enzyme catalyses 3'-dephospho-CoA + ATP = ADP + CoA + H(+). It functions in the pathway cofactor biosynthesis; coenzyme A biosynthesis; CoA from (R)-pantothenate: step 5/5. Catalyzes the phosphorylation of the 3'-hydroxyl group of dephosphocoenzyme A to form coenzyme A. This chain is Dephospho-CoA kinase, found in Nostoc sp. (strain PCC 7120 / SAG 25.82 / UTEX 2576).